A 900-amino-acid polypeptide reads, in one-letter code: Aldos-2-ulose dehydratase (900 aa).

Residues 1-433 (MYSKVFLKPH…NPSINVFLST (433 aa)) form a dehydratase domain region. Tyr35 provides a ligand contact to ascopyrone M. Residues Asp101, Thr103, Asn105, Phe107, and Asp109 each contribute to the Mg(2+) site. Tyr116, Met120, His155, His215, His295, and His337 together coordinate ascopyrone M. His155 functions as the Proton acceptor in the catalytic mechanism. Residues His215, His295, His337, Asp343, Asp345, Asp347, Glu349, and Glu351 each contribute to the Zn(2+) site. Ascopyrone M-binding residues include Tyr414, Tyr419, and Ala627. Positions 434-739 (GILAERLDEE…EFPGFETFST (306 aa)) are isomerase domain. 1,5-anhydro-D-fructose contacts are provided by Ala627 and His630. Residues His630, His632, and Glu639 each coordinate Zn(2+). Ascopyrone M contacts are provided by Glu639 and His641. His641 serves as a coordination point for 1,5-anhydro-D-fructose. His709 serves as a coordination point for Zn(2+). Trp726 lines the ascopyrone M pocket. Position 726 (Trp726) interacts with 1,5-anhydro-D-fructose.

Homodimer. Requires Zn(2+) as cofactor.

The enzyme catalyses 1,5-anhydro-D-fructose = microthecin + H2O. It catalyses the reaction 1,5-anhydro-D-fructose = ascopyrone M + H2O. It carries out the reaction ascopyrone M = microthecin. The catalysed reaction is 2-dehydro-D-glucose = cortalcerone + H2O. Its pathway is carbohydrate metabolism; 1,5-anhydro-D-fructose degradation. Its function is as follows. A bifunctional enzyme which catalyzes the dehydration of anhydrofructose into ascopyrone M, and the isomerization of ascopyrone M into microthecin. To a lesser extent, can also act on 2-dehydro-D-glucopyranose (D-glucosone), leading to the antibiotic cortalcerone. This Phanerodontia chrysosporium (White-rot fungus) protein is Aldos-2-ulose dehydratase.